Consider the following 941-residue polypeptide: Cilia- and flagella-associated protein 69 (941 aa).

Positions 1–14 (MWTEEAGATAEAQE) are enriched in low complexity. The interval 1 to 26 (MWTEEAGATAEAQESGIRNKSSSSSQ) is disordered. Residues 16–26 (GIRNKSSSSSQ) are compositionally biased toward polar residues.

In terms of tissue distribution, highly expressed in the testis, specifically in sperm (at protein level). Expressed in the brain, kidney, liver, lung, and intestine.

The protein resides in the cell projection. It is found in the cilium. Its subcellular location is the flagellum. Its function is as follows. Cilium- and flagellum-associated protein. In the olfactory epithelium, regulates the speed of activation and termination of the odor response and thus contributes to the robustness of olfactory transduction pathways. Required for sperm flagellum assembly and stability. The polypeptide is Cilia- and flagella-associated protein 69 (Homo sapiens (Human)).